The sequence spans 35 residues: Non-specific lipid-transfer protein 1 (35 aa).

Residues cysteine 13 and cysteine 28 are joined by a disulfide bond.

In terms of tissue distribution, seeds.

Its function is as follows. Plant non-specific lipid-transfer proteins transfer phospholipids as well as galactolipids across membranes. May play a role in wax or cutin deposition in the cell walls of expanding epidermal cells and certain secretory tissues. Inhibits the growth of F.oxysporum and P.infestans. The protein is Non-specific lipid-transfer protein 1 of Nigella sativa (Black cumin).